Here is a 599-residue protein sequence, read N- to C-terminus: Elongation factor 4 (599 aa).

One can recognise a tr-type G domain in the interval 2–184; the sequence is KHIRNFSIIA…RLVRDIPPPE (183 aa). GTP is bound by residues 14-19 and 131-134; these read DHGKST and NKID.

Belongs to the TRAFAC class translation factor GTPase superfamily. Classic translation factor GTPase family. LepA subfamily.

It localises to the cell inner membrane. The catalysed reaction is GTP + H2O = GDP + phosphate + H(+). Required for accurate and efficient protein synthesis under certain stress conditions. May act as a fidelity factor of the translation reaction, by catalyzing a one-codon backward translocation of tRNAs on improperly translocated ribosomes. Back-translocation proceeds from a post-translocation (POST) complex to a pre-translocation (PRE) complex, thus giving elongation factor G a second chance to translocate the tRNAs correctly. Binds to ribosomes in a GTP-dependent manner. The sequence is that of Elongation factor 4 from Pectobacterium carotovorum subsp. carotovorum (strain PC1).